Consider the following 178-residue polypeptide: Nicotinamide-nucleotide adenylyltransferase (178 aa).

It belongs to the archaeal NMN adenylyltransferase family.

It localises to the cytoplasm. It carries out the reaction beta-nicotinamide D-ribonucleotide + ATP + H(+) = diphosphate + NAD(+). The protein operates within cofactor biosynthesis; NAD(+) biosynthesis; NAD(+) from nicotinamide D-ribonucleotide: step 1/1. In Pyrobaculum neutrophilum (strain DSM 2338 / JCM 9278 / NBRC 100436 / V24Sta) (Thermoproteus neutrophilus), this protein is Nicotinamide-nucleotide adenylyltransferase.